Consider the following 2097-residue polypeptide: MIRYQIRNEYGLSDPELYAPGEKDDPEALLEGVAMAGLVGVLRQLGDLAEFAAEIFHDLHEDVMATASRGHGLMLRLRQLEAEFPAVEKAIISQSDHSNYPHDDGVEWHTNLQIDQNMITQGDMPRFILDSYEECRGPPRLFTLDKFDVAGAGASLKRYSDPSFFKTEHSSDMIETDAVIEKKPRKIKKKALRWRKGETLESLLIANSESHTTSKDRSSRKVPPRTTKLKYRYPRESDHKNISRICREHLQEIISSQQKIFSNYSSRYYHPKFRLTESSETASSFGEIDNFSARAQSSAKLELTKVVPINEFDTKGIAPTHINGSDCLEALEADDRQLQATQHEPDKVEDVCKRSLVEQNAMLSNSDRMQSVQEENLLSAMVPADQNDDRCRPDDTGSDQENFVDALNNMESEGEAHAEMKIKKDPGAKMELDELNFHRDEGENERHTEFSELGHVIDSSPWLNDSYNGGEPNHAISSNTNFSGVDCTNDEEPSNDVDLMEMDVSSSSSVFSDDNDVFRTNGNMNGFQQYQEASLSNDHHAVIAHSSDKQSSQKSSGLDGSSIESNDFIEKPFHSLEDDKNFAPDGTSVILGRPNDVSQCEEEIEVGNADDSLLQPTISNQEVHRSNNQLEGVAMHASISSGKVASFPDMDPGMCTKDLELDNVLVPKETVANTPPTGLGTDHIHEHVDELDSGVAPINSSIQSDSTYESDDDDMAEDLNSLPEDDLYKHDVEDLYKHVLEDDGIIALGKGPCSTRANMHQEDPMEVSDVRGDFSNGQELPVLTETASPQGELVGGGELPLLTETASPQGGEEDLADEVVVISSRDLNDEKKPSLAEVPLACGDASLLDSSASCLEHDESTETGEIAKSDEVLVNVEVAEESITGRFTDDMTPFQEDLPDGAKYSEDAEFLANPRVDNSRHDVQLQSSSPCREELETVKAPCENLCALDESREHIFEKSVLQINNLPQHIETKNTGEACSDIDDIQHLSALHCPKNPVCQEELPDETNLSADVQYHCDVEKGGAVILNSKMVEEQPENIDLVREPRAQDSFGTNPFMDPGYKANHALADPCPSYQPCFSEEEQDFISELLIPHGNMGIEDLNPVPVADSLWEPATPPDEVPLPSEVMTEEDFRSFCHEYHEMDLTATPESIDDKPASDSNVVSSSLVTSESEFLYCVSAVRTGVDQEESRDAPDDTLMHFSAKADPDDKAANSDLKSDEPFIDEKIHELGVPSVPMELEVEQHALHEVDSHGDSQLLDNDMIDETCSSPSGNSIAVKDKQETCANLVSRAFINERTDELEVPVSNSVLLEPSEEVHDSDEYNYQDVPWSSTDEGRDEVDAHPLSKRIQTQGSEALVLGELDSRAVPSCSVNEMADHVDAPPLSTVLEAEQEPEDCISGEHNSQVTKSSLVDEKIGELDDASPLSNTLLAEMEREVCVPGKSASQIASCSPTPSNEKIDELNAPPLSSSGLIELESEDSVSGDLDSQIIPCSSPNDKTNEPDGATSTHVLPVELEQEVCSFPELDSLVAPCSLNDDKVCELDEPPCKQLESENGSYCLPQVDCQIEPCYSESVVLSEASTMSSANAMPSTEETYRLSSPVPPPNEPFSNVSYEDPQKPPPLPPLLWRLGKPRLGIASTKGHMLEPERGKGPVLHTSDAGMDNMPGCLSGMTESIEPVSSQEIKERHLDPILDNNERGVEFRRLATPPTANDVAVTEHVQLFSDACENIKHQERVSSSETEAEEHQNGTGITDVMDSHPPKPLFLVPSISQQGLQGSVFPSDTSDNGEHSSYTSRAVSEDEKTVDDHNAACAMDLHITSSSASSHVSENGCNQQSHGESLPVTSVDKVHTSDASCEDNKLKNHFITSEVCSDATNLSASGLLTEEENIHNVEDQYEGPLPSEESSGCLDYPHDDHNSEKEDIHQPDGYAASPGNNNHFDSSHEGGYLHAEQPPVMGWTVRPQMLHPNYGISMEENQFEPKVEDHLLIKKPVSIRNIPRNPLVDAVAAHDRSTMRKVSELVAPTDKSKPNERNLLLEQIRNKTFNLKPVSSAKQPTIRTPPRASTRNLKVAAIIEKANAIRQAVGSDDEDGDNWSESSDT.

7 disordered regions span residues 205 to 227 (IANS…PRTT), 544 to 565 (AHSS…SIES), 1443 to 1467 (SQIA…PLSS), 1588 to 1616 (STEE…DPQK), 1730 to 1802 (QERV…EKTV), 1820 to 1842 (ASSH…PVTS), and 1893 to 1944 (YEGP…EGGY). Positions 549 to 562 (KQSSQKSSGLDGSS) are enriched in low complexity. Polar residues predominate over residues 1443–1454 (SQIASCSPTPSN). The span at 1766 to 1794 (SISQQGLQGSVFPSDTSDNGEHSSYTSRA) shows a compositional bias: polar residues. Basic and acidic residues predominate over residues 1908-1922 (YPHDDHNSEKEDIHQ). The WH2 domain occupies 2028 to 2046 (ERNLLLEQIRNKTFNLKPV).

It belongs to the SCAR/WAVE family.

The protein resides in the cytoplasm. Its subcellular location is the cytoskeleton. Involved in regulation of actin and microtubule organization. Part of a WAVE complex that activates the Arp2/3 complex. The polypeptide is SCAR-like protein 1 (Oryza sativa subsp. japonica (Rice)).